We begin with the raw amino-acid sequence, 514 residues long: tRNA-2-methylthio-N(6)-dimethylallyladenosine synthase (514 aa).

The region spanning 68-186 is the MTTase N-terminal domain; that stretch reads RTFLIKTYGC…LPEILEEAYL (119 aa). Residues C77, C113, C147, C223, C227, and C230 each coordinate [4Fe-4S] cluster. The Radical SAM core domain maps to 209 to 439; the sequence is REGSTKAWVN…NKKVGHYSEK (231 aa). The TRAM domain maps to 442–505; the sequence is NQYEGKTVTV…QYSLNGTFKE (64 aa).

The protein belongs to the methylthiotransferase family. MiaB subfamily. Monomer. [4Fe-4S] cluster is required as a cofactor.

Its subcellular location is the cytoplasm. The enzyme catalyses N(6)-dimethylallyladenosine(37) in tRNA + (sulfur carrier)-SH + AH2 + 2 S-adenosyl-L-methionine = 2-methylsulfanyl-N(6)-dimethylallyladenosine(37) in tRNA + (sulfur carrier)-H + 5'-deoxyadenosine + L-methionine + A + S-adenosyl-L-homocysteine + 2 H(+). Catalyzes the methylthiolation of N6-(dimethylallyl)adenosine (i(6)A), leading to the formation of 2-methylthio-N6-(dimethylallyl)adenosine (ms(2)i(6)A) at position 37 in tRNAs that read codons beginning with uridine. The polypeptide is tRNA-2-methylthio-N(6)-dimethylallyladenosine synthase (Staphylococcus haemolyticus (strain JCSC1435)).